We begin with the raw amino-acid sequence, 591 residues long: CTP synthase 1 (591 aa).

Lys100 is subject to N6-acetyllysine. The 255-residue stretch at 300–554 (SIALVGKYTK…LASVGRLSHY (255 aa)) folds into the Glutamine amidotransferase type-1 domain. Active-site for GATase activity residues include Cys399, His526, and Glu528. Ser562, Ser568, Ser571, Ser573, Ser574, Ser575, Ser578, and Ser587 each carry phosphoserine. The disordered stretch occupies residues 562–591 (SPRDTYSDRSGSSSPDSEITELKFPSINHD). The segment covering 569–578 (DRSGSSSPDS) has biased composition (low complexity).

It belongs to the CTP synthase family. As to expression, widely expressed.

It localises to the cytoplasm. The protein resides in the cytosol. The enzyme catalyses UTP + L-glutamine + ATP + H2O = CTP + L-glutamate + ADP + phosphate + 2 H(+). Its pathway is pyrimidine metabolism; CTP biosynthesis via de novo pathway; CTP from UDP: step 2/2. Its activity is regulated as follows. Activated by GTP and inhibited by CTP. This enzyme is involved in the de novo synthesis of CTP, a precursor of DNA, RNA and phospholipids. Catalyzes the ATP-dependent amination of UTP to CTP with either L-glutamine or ammonia as a source of nitrogen. This enzyme and its product, CTP, play a crucial role in the proliferation of activated lymphocytes and therefore in immunity. This chain is CTP synthase 1, found in Homo sapiens (Human).